The following is a 3305-amino-acid chain: Apolipophorins (3305 aa).

The first 23 residues, 1–23, serve as a signal peptide directing secretion; it reads MGKSNRLLSVLFVISVLWKAAYG. In terms of domain architecture, Vitellogenin spans 39-640; that stretch reads FAAGQKYNYG…SQTSFLPRSV (602 aa). N643 and N2769 each carry an N-linked (GlcNAc...) asparagine glycan. Residues 2733 to 2899 form the VWFD domain; the sequence is LRAVVVNGQH…NSYRLSRSCP (167 aa). Residues C2757 and C2898 are joined by a disulfide bond.

Post-translationally, cleaved into 2 chains by furin protease. However, prevention of cleavage does not impair its function. N-glycosylated.

It localises to the secreted. Its function is as follows. Constitutes the major component of lipophorin, which mediates transport for various types of lipids in hemolymph. Acts by forming lipoprotein particles that bind lipoproteins and lipids. May be required for morphogens wingless (wg) and hedgehog (hh) function, possibly by acting as vehicles for the movement of wg and hh. This Manduca sexta (Tobacco hawkmoth) protein is Apolipophorins.